We begin with the raw amino-acid sequence, 337 residues long: Tetraacyldisaccharide 4'-kinase (337 aa).

55–62 provides a ligand contact to ATP; sequence TIGGNGKT.

This sequence belongs to the LpxK family.

It carries out the reaction a lipid A disaccharide + ATP = a lipid IVA + ADP + H(+). Its pathway is glycolipid biosynthesis; lipid IV(A) biosynthesis; lipid IV(A) from (3R)-3-hydroxytetradecanoyl-[acyl-carrier-protein] and UDP-N-acetyl-alpha-D-glucosamine: step 6/6. Its function is as follows. Transfers the gamma-phosphate of ATP to the 4'-position of a tetraacyldisaccharide 1-phosphate intermediate (termed DS-1-P) to form tetraacyldisaccharide 1,4'-bis-phosphate (lipid IVA). The chain is Tetraacyldisaccharide 4'-kinase from Blochmanniella pennsylvanica (strain BPEN).